We begin with the raw amino-acid sequence, 294 residues long: uncharacterized protein (294 aa).

An N-terminal signal peptide occupies residues 1 to 16; that stretch reads MQNFMVLLLLIVAVVA. Asn25 and Asn162 each carry an N-linked (GlcNAc...) asparagine; by host glycan.

This is an uncharacterized protein from Acheta domesticus (House cricket).